We begin with the raw amino-acid sequence, 436 residues long: Methylenetetrahydrofolate--tRNA-(uracil-5-)-methyltransferase TrmFO (436 aa).

G8–G13 is an FAD binding site.

It belongs to the MnmG family. TrmFO subfamily. FAD serves as cofactor.

The protein resides in the cytoplasm. It catalyses the reaction uridine(54) in tRNA + (6R)-5,10-methylene-5,6,7,8-tetrahydrofolate + NADH + H(+) = 5-methyluridine(54) in tRNA + (6S)-5,6,7,8-tetrahydrofolate + NAD(+). The catalysed reaction is uridine(54) in tRNA + (6R)-5,10-methylene-5,6,7,8-tetrahydrofolate + NADPH + H(+) = 5-methyluridine(54) in tRNA + (6S)-5,6,7,8-tetrahydrofolate + NADP(+). Catalyzes the folate-dependent formation of 5-methyl-uridine at position 54 (M-5-U54) in all tRNAs. This chain is Methylenetetrahydrofolate--tRNA-(uracil-5-)-methyltransferase TrmFO, found in Persephonella marina (strain DSM 14350 / EX-H1).